Consider the following 456-residue polypeptide: Riboflavin transporter RibZ (456 aa).

14 consecutive transmembrane segments (helical) span residues 5–25 (WIVL…GSIL), 45–65 (WVVT…GKLG), 78–98 (FFIF…STLI), 105–125 (AVGA…AFPA), 134–154 (ITGA…GIIL), 158–178 (GWPS…FLGI), 192–212 (SFDI…LLAM), 220–240 (LYLG…EVKF), 260–280 (IIGV…PFYL), 289–309 (MMAG…APIA), 321–341 (ILTA…LLKA), 343–363 (SPLY…GAFS), 385–405 (FLAT…SSFF), and 428–448 (QSYW…VFFM).

This sequence belongs to the major facilitator superfamily.

Its subcellular location is the cell membrane. Transports riboflavin into the cell. The chain is Riboflavin transporter RibZ from Clostridioides difficile (strain 630) (Peptoclostridium difficile).